The following is a 118-amino-acid chain: Large ribosomal subunit protein uL22 (118 aa).

Belongs to the universal ribosomal protein uL22 family. As to quaternary structure, part of the 50S ribosomal subunit.

Functionally, this protein binds specifically to 23S rRNA; its binding is stimulated by other ribosomal proteins, e.g. L4, L17, and L20. It is important during the early stages of 50S assembly. It makes multiple contacts with different domains of the 23S rRNA in the assembled 50S subunit and ribosome. In terms of biological role, the globular domain of the protein is located near the polypeptide exit tunnel on the outside of the subunit, while an extended beta-hairpin is found that lines the wall of the exit tunnel in the center of the 70S ribosome. The polypeptide is Large ribosomal subunit protein uL22 (Prosthecochloris aestuarii (strain DSM 271 / SK 413)).